A 138-amino-acid chain; its full sequence is UPF0310 protein MAV_1800 (138 aa).

The protein belongs to the UPF0310 family.

The chain is UPF0310 protein MAV_1800 from Mycobacterium avium (strain 104).